Here is a 222-residue protein sequence, read N- to C-terminus: Small ribosomal subunit protein uS3 (222 aa).

The KH type-2 domain maps to 39-108 (IRKFVKNKLS…NVLINIVEVK (70 aa)).

Belongs to the universal ribosomal protein uS3 family. Part of the 30S ribosomal subunit. Forms a tight complex with proteins S10 and S14.

Its function is as follows. Binds the lower part of the 30S subunit head. Binds mRNA in the 70S ribosome, positioning it for translation. The sequence is that of Small ribosomal subunit protein uS3 from Clostridium acetobutylicum (strain ATCC 824 / DSM 792 / JCM 1419 / IAM 19013 / LMG 5710 / NBRC 13948 / NRRL B-527 / VKM B-1787 / 2291 / W).